We begin with the raw amino-acid sequence, 254 residues long: UPF0246 protein BDI_1226 (254 aa).

The protein belongs to the UPF0246 family.

In Parabacteroides distasonis (strain ATCC 8503 / DSM 20701 / CIP 104284 / JCM 5825 / NCTC 11152), this protein is UPF0246 protein BDI_1226.